The primary structure comprises 509 residues: Maturase K (509 aa).

Belongs to the intron maturase 2 family. MatK subfamily.

It is found in the plastid. The protein resides in the chloroplast. Functionally, usually encoded in the trnK tRNA gene intron. Probably assists in splicing its own and other chloroplast group II introns. The polypeptide is Maturase K (Nymphaea odorata (White water lily)).